The primary structure comprises 872 residues: Protein SCD5 (872 aa).

2 disordered regions span residues 1 to 98 (MSFD…SGGD) and 209 to 239 (PKPRPILSSENHEEVYEEVEDDDSSAKTGDQ). Residues 48-85 (FWDQGSRSHSDTTLSYRNNHSNTAADNATNVSSPQKDN) are compositionally biased toward polar residues. A KKRVK motif; Required for interaction with GLC7, endocytosis and actin cytoskeleton organization motif is present at residues 272–276 (KKVRF). Disordered stretches follow at residues 280–321 (ITFQ…LDFT) and 338–358 (SGLVSSLPSEQQETEEEKKVL). Composition is skewed to polar residues over residues 284 to 296 (DPPNLNQESSNNS) and 339 to 348 (GLVSSLPSEQ). 12 tandem repeats follow at residues 405 to 424 (QLPLEPLKPTATGSANHLVR), 439 to 458 (QTGLQPLKPTATGSANYLMR), 479 to 498 (SGGLQPLKPTATGSANYLMK), 534 to 545 (SPNITLPQSNQQ), 564 to 575 (SPQHTYSNNVRI), 593 to 604 (PPQNTLPQHQQS), 608 to 619 (SPQNTIPQHQRS), 623 to 634 (SPQNTFTQNQPI), 636 to 647 (SPQHTYSNNQAT), 650 to 661 (SPQNTYTNNQQQ), 683 to 694 (PPQHMYSNVQKQ), and 717 to 728 (SPQNAANSYFQS). The segment at 405–448 (QLPLEPLKPTATGSANHLVREEYNQGLHPSNGAIQTGLQPLKPT) is 3 X 20 AA approximate repeats. Phosphothreonine; by PRK1 is present on residues T416 and T450. The tract at residues 460–489 (HMEQPQSIKPSSTPETVTNSGGLQPLKPTA) is disordered. Over residues 462 to 481 (EQPQSIKPSSTPETVTNSGG) the composition is skewed to polar residues. At T490 the chain carries Phosphothreonine; by PRK1. Disordered regions lie at residues 516-571 (QFTN…TYSN) and 591-620 (AFPPQNTLPQHQQSHLLSPQNTIPQHQRSQ). The interval 534–728 (SPNITLPQSN…QNAANSYFQS (195 aa)) is 9 X 12 AA approximate repeats. The residue at position 564 (S564) is a Phosphoserine. A compositionally biased stretch (polar residues) spans 594 to 620 (PQNTLPQHQQSHLLSPQNTIPQHQRSQ). Residues 649–681 (ISPQNTYTNNQQQPQHLPPPPPPRAQQQQQGAI) are disordered. The span at 651–663 (PQNTYTNNQQQPQ) shows a compositional bias: low complexity. Polar residues predominate over residues 697 to 727 (LVPTQPSYTNSPSIQSPNFLSPQNAANSYFQ). Disordered regions lie at residues 697–758 (LVPT…ISSF) and 806–838 (NSDIHSQPNKPNYGMLGQQVHQQQQQQQQQFPF). Residues 728 to 745 (SLLSSSPSPNPTPSNAST) are compositionally biased toward low complexity. Polar residues-rich tracts occupy residues 746–758 (VNGNNASNGISSF) and 806–815 (NSDIHSQPNK). Residues 823-835 (QQVHQQQQQQQQQ) show a composition bias toward low complexity.

As to quaternary structure, interacts (via KKVRF motif) with phosphatase GLC7. In terms of processing, phosphorylation by PRK1 and/or AKL1 on Thr-416, Thr-450 and Thr-490 of repeats 1-1, 1-2 and/or 1-3 negatively regulates SCD5 function in endocytosis and actin cytoskeleton organization.

The protein localises to the membrane. Functionally, regulates both fluid phase and receptor-mediated endocytosis. Involved in vesicular transport at a late stage of the secretory pathway. Regulates actin cytoskeleton organization. The protein is Protein SCD5 (SCD5) of Saccharomyces cerevisiae (strain ATCC 204508 / S288c) (Baker's yeast).